Here is a 313-residue protein sequence, read N- to C-terminus: Porphobilinogen deaminase (313 aa).

Cysteine 242 is subject to S-(dipyrrolylmethanemethyl)cysteine.

This sequence belongs to the HMBS family. Monomer. It depends on dipyrromethane as a cofactor.

It carries out the reaction 4 porphobilinogen + H2O = hydroxymethylbilane + 4 NH4(+). It participates in porphyrin-containing compound metabolism; protoporphyrin-IX biosynthesis; coproporphyrinogen-III from 5-aminolevulinate: step 2/4. Tetrapolymerization of the monopyrrole PBG into the hydroxymethylbilane pre-uroporphyrinogen in several discrete steps. This chain is Porphobilinogen deaminase, found in Pseudomonas putida (strain GB-1).